The primary structure comprises 258 residues: Imidazole glycerol phosphate synthase subunit HisF (258 aa).

Residues Asp11 and Asp130 contribute to the active site.

It belongs to the HisA/HisF family. As to quaternary structure, heterodimer of HisH and HisF.

The protein localises to the cytoplasm. The enzyme catalyses 5-[(5-phospho-1-deoxy-D-ribulos-1-ylimino)methylamino]-1-(5-phospho-beta-D-ribosyl)imidazole-4-carboxamide + L-glutamine = D-erythro-1-(imidazol-4-yl)glycerol 3-phosphate + 5-amino-1-(5-phospho-beta-D-ribosyl)imidazole-4-carboxamide + L-glutamate + H(+). It functions in the pathway amino-acid biosynthesis; L-histidine biosynthesis; L-histidine from 5-phospho-alpha-D-ribose 1-diphosphate: step 5/9. IGPS catalyzes the conversion of PRFAR and glutamine to IGP, AICAR and glutamate. The HisF subunit catalyzes the cyclization activity that produces IGP and AICAR from PRFAR using the ammonia provided by the HisH subunit. This Rhodopseudomonas palustris (strain BisB18) protein is Imidazole glycerol phosphate synthase subunit HisF.